We begin with the raw amino-acid sequence, 393 residues long: Methylthioribose kinase (393 aa).

Residues Asn38, Lys53, and Glu107–Leu109 contribute to the ATP site. Asp225 is a binding site for substrate. ATP is bound at residue Asp242–Glu244. Arg332 is a substrate binding site.

The protein belongs to the methylthioribose kinase family. As to quaternary structure, homodimer.

The enzyme catalyses 5-(methylsulfanyl)-D-ribose + ATP = 5-(methylsulfanyl)-alpha-D-ribose 1-phosphate + ADP + H(+). The protein operates within amino-acid biosynthesis; L-methionine biosynthesis via salvage pathway; S-methyl-5-thio-alpha-D-ribose 1-phosphate from S-methyl-5'-thioadenosine (hydrolase route): step 2/2. Catalyzes the phosphorylation of methylthioribose into methylthioribose-1-phosphate. In Bacillus cereus (strain ATCC 10987 / NRS 248), this protein is Methylthioribose kinase.